The primary structure comprises 334 residues: Protein-methionine-sulfoxide reductase catalytic subunit MsrP (334 aa).

The tat-type signal signal peptide spans 1–44 (MKKNQFLKESDVTAESVFFMKRRQVLKALGISAAAFSLPHAAHA). Residues Asn-88, 91–92 (YE), Cys-146, Thr-181, Asn-233, Arg-238, and 249–251 (GIK) contribute to the Mo-molybdopterin site.

Belongs to the MsrP family. As to quaternary structure, heterodimer of a catalytic subunit (MsrP) and a heme-binding subunit (MsrQ). Mo-molybdopterin serves as cofactor. Predicted to be exported by the Tat system. The position of the signal peptide cleavage has not been experimentally proven.

It localises to the periplasm. It catalyses the reaction L-methionyl-[protein] + a quinone + H2O = L-methionyl-(S)-S-oxide-[protein] + a quinol. The enzyme catalyses L-methionyl-[protein] + a quinone + H2O = L-methionyl-(R)-S-oxide-[protein] + a quinol. In terms of biological role, part of the MsrPQ system that repairs oxidized periplasmic proteins containing methionine sulfoxide residues (Met-O), using respiratory chain electrons. Thus protects these proteins from oxidative-stress damage caused by reactive species of oxygen and chlorine generated by the host defense mechanisms. MsrPQ is essential for the maintenance of envelope integrity under bleach stress, rescuing a wide series of structurally unrelated periplasmic proteins from methionine oxidation, including the primary periplasmic chaperone SurA and the lipoprotein Pal. The catalytic subunit MsrP is non-stereospecific, being able to reduce both (R-) and (S-) diastereoisomers of methionine sulfoxide. The polypeptide is Protein-methionine-sulfoxide reductase catalytic subunit MsrP (Escherichia coli O6:H1 (strain CFT073 / ATCC 700928 / UPEC)).